A 397-amino-acid chain; its full sequence is Phosphoglycerate kinase (397 aa).

Substrate is bound by residues 21-23, Arg-37, 60-63, Arg-119, and Arg-152; these read DFN and HLGR. ATP-binding positions include Lys-203, Gly-294, Glu-325, and 354-357; that span reads GGDS.

It belongs to the phosphoglycerate kinase family. As to quaternary structure, monomer.

The protein localises to the cytoplasm. It carries out the reaction (2R)-3-phosphoglycerate + ATP = (2R)-3-phospho-glyceroyl phosphate + ADP. It participates in carbohydrate degradation; glycolysis; pyruvate from D-glyceraldehyde 3-phosphate: step 2/5. The chain is Phosphoglycerate kinase from Chlorobium chlorochromatii (strain CaD3).